We begin with the raw amino-acid sequence, 237 residues long: Class B acid phosphatase (237 aa).

The signal sequence occupies residues 1–25 (MRKVSLALSAACLLFTLNYTASALA). Asp-69 serves as the catalytic Nucleophile. Residues Asp-69 and Asp-71 each coordinate Mg(2+). Asp-71 (proton donor) is an active-site residue. Substrate-binding positions include 137–138 (TG) and Lys-177. Asp-192 lines the Mg(2+) pocket.

It belongs to the class B bacterial acid phosphatase family. In terms of assembly, homotetramer. Mg(2+) is required as a cofactor.

It localises to the periplasm. It carries out the reaction a phosphate monoester + H2O = an alcohol + phosphate. In terms of biological role, dephosphorylates several organic phosphate monoesters. Also has a phosphotransferase activity catalyzing the transfer of low-energy phosphate groups from organic phosphate monoesters to free hydroxyl groups of various organic compounds. This chain is Class B acid phosphatase, found in Citrobacter rodentium (strain ICC168) (Citrobacter freundii biotype 4280).